Consider the following 274-residue polypeptide: MQQLQNVIEAAFERRADITPVNADTAIREAVSQVIALLDSGALRVAEKIDGQWVTHQWLKKAVLLSFRINDNQVIEGAESRFYDKVPMKFADYDEARFKKEGFRVVPPAAVRQGSFIARNTVLMPSYVNIGAYVDEGSMVDTWATVGSCAQIGKNVHLSGGVGIGGVLEPLQANPTIIEDNCFIGARSEIVEGVIVEEGSVISMGVYIGQSTKIYDRETGEVHYGRVPAGSVVVSGNLPSKDGSYSLYCAVIVKKVDAKTLSKTGINELLRTID.

It belongs to the transferase hexapeptide repeat family.

The protein localises to the cytoplasm. It catalyses the reaction (S)-2,3,4,5-tetrahydrodipicolinate + succinyl-CoA + H2O = (S)-2-succinylamino-6-oxoheptanedioate + CoA. It participates in amino-acid biosynthesis; L-lysine biosynthesis via DAP pathway; LL-2,6-diaminopimelate from (S)-tetrahydrodipicolinate (succinylase route): step 1/3. This is 2,3,4,5-tetrahydropyridine-2,6-dicarboxylate N-succinyltransferase from Erwinia tasmaniensis (strain DSM 17950 / CFBP 7177 / CIP 109463 / NCPPB 4357 / Et1/99).